Consider the following 114-residue polypeptide: uncharacterized protein (114 aa).

In terms of domain architecture, HIT spans 6 to 114 (IFGKIIRREI…GGRSLAWPPG (109 aa)). The Histidine triad motif signature appears at 98 to 102 (HLHIH).

This is an uncharacterized protein from Synechococcus elongatus (strain ATCC 33912 / PCC 7942 / FACHB-805) (Anacystis nidulans R2).